The primary structure comprises 170 residues: uncharacterized protein (170 aa).

This is an uncharacterized protein from Aquifex aeolicus (strain VF5).